The primary structure comprises 336 residues: Pyridoxal 5'-phosphate synthase subunit PdxS (336 aa).

A D-ribose 5-phosphate-binding site is contributed by D30. Catalysis depends on K87, which acts as the Schiff-base intermediate with D-ribose 5-phosphate. G159 serves as a coordination point for D-ribose 5-phosphate. R171 lines the D-glyceraldehyde 3-phosphate pocket. Residues G257 and 278–279 each bind D-ribose 5-phosphate; that span reads GS.

Belongs to the PdxS/SNZ family. As to quaternary structure, in the presence of PdxT, forms a dodecamer of heterodimers.

It catalyses the reaction aldehydo-D-ribose 5-phosphate + D-glyceraldehyde 3-phosphate + L-glutamine = pyridoxal 5'-phosphate + L-glutamate + phosphate + 3 H2O + H(+). Its pathway is cofactor biosynthesis; pyridoxal 5'-phosphate biosynthesis. In terms of biological role, catalyzes the formation of pyridoxal 5'-phosphate from ribose 5-phosphate (RBP), glyceraldehyde 3-phosphate (G3P) and ammonia. The ammonia is provided by the PdxT subunit. Can also use ribulose 5-phosphate and dihydroxyacetone phosphate as substrates, resulting from enzyme-catalyzed isomerization of RBP and G3P, respectively. This is Pyridoxal 5'-phosphate synthase subunit PdxS from Thermoplasma volcanium (strain ATCC 51530 / DSM 4299 / JCM 9571 / NBRC 15438 / GSS1).